A 1692-amino-acid polypeptide reads, in one-letter code: Protein TOPAZ1 (1692 aa).

Disordered regions lie at residues 1–135 (MRRP…PGLD), 600–629 (ELSRRGSEVISNTTEDTQLTSETQSLTGNK), and 894–919 (EPNVAGEHQSTDSKYMETPVKKEPSD). Residues 31 to 40 (GAAGGCGPEA) are compositionally biased toward gly residues. Basic and acidic residues predominate over residues 95-116 (SDPRGLEAAKEAELPLQTERHT). Positions 608 to 627 (VISNTTEDTQLTSETQSLTG) are enriched in polar residues. Basic and acidic residues predominate over residues 902 to 919 (QSTDSKYMETPVKKEPSD).

It localises to the cytoplasm. Its subcellular location is the cytosol. In terms of biological role, important for normal spermatogenesis and male fertility. Specifically required for progression to the post-meiotic stages of spermatocyte development. Seems to be necessary for normal expression levels of a number of testis-expressed gene transcripts, although its role in this process is unclear. This Homo sapiens (Human) protein is Protein TOPAZ1 (TOPAZ1).